We begin with the raw amino-acid sequence, 474 residues long: tRNA-2-methylthio-N(6)-dimethylallyladenosine synthase (474 aa).

The MTTase N-terminal domain occupies 3–120 (QKLHIKTWGC…LPEMINQIRG (118 aa)). 6 residues coordinate [4Fe-4S] cluster: Cys12, Cys49, Cys83, Cys157, Cys161, and Cys164. The region spanning 143-375 (RAEGPTAFVS…QERINQQAAQ (233 aa)) is the Radical SAM core domain. Positions 378-441 (RRMLGTEQRV…TNSLRGEVVR (64 aa)) constitute a TRAM domain.

Belongs to the methylthiotransferase family. MiaB subfamily. As to quaternary structure, monomer. [4Fe-4S] cluster is required as a cofactor.

The protein resides in the cytoplasm. It carries out the reaction N(6)-dimethylallyladenosine(37) in tRNA + (sulfur carrier)-SH + AH2 + 2 S-adenosyl-L-methionine = 2-methylsulfanyl-N(6)-dimethylallyladenosine(37) in tRNA + (sulfur carrier)-H + 5'-deoxyadenosine + L-methionine + A + S-adenosyl-L-homocysteine + 2 H(+). In terms of biological role, catalyzes the methylthiolation of N6-(dimethylallyl)adenosine (i(6)A), leading to the formation of 2-methylthio-N6-(dimethylallyl)adenosine (ms(2)i(6)A) at position 37 in tRNAs that read codons beginning with uridine. The sequence is that of tRNA-2-methylthio-N(6)-dimethylallyladenosine synthase from Haemophilus influenzae (strain PittGG).